Consider the following 859-residue polypeptide: DNA mismatch repair protein MutS (859 aa).

618–625 (GPNMGGKS) contacts ATP.

This sequence belongs to the DNA mismatch repair MutS family.

This protein is involved in the repair of mismatches in DNA. It is possible that it carries out the mismatch recognition step. This protein has a weak ATPase activity. This is DNA mismatch repair protein MutS from Shewanella halifaxensis (strain HAW-EB4).